Here is a 271-residue protein sequence, read N- to C-terminus: uncharacterized protein (271 aa).

One can recognise a DOD-type homing endonuclease domain in the interval 77–205; the sequence is IIGVYFGDAN…SKELLKKLDV (129 aa).

This is an uncharacterized protein from Methanocaldococcus jannaschii (strain ATCC 43067 / DSM 2661 / JAL-1 / JCM 10045 / NBRC 100440) (Methanococcus jannaschii).